The primary structure comprises 304 residues: MISDYDALLQFNKKPVSQEMIQFLATSTASIIKIRENNNPIQGCRPPDLSIFIKNVVIQSNVQTPTLMATSVYLNKLKSVIPKNVYGINTTRHRIFLGCLILAAKTLNDSSPWNKHWTTYTEGLLRIREVNTIERELLEYLNWDVRITTPDLIDSLSYFLGPIKEQLFLQRRQEMLLFNAPSPGQLKEYINHRRPVSHSRTSSAISVPSLTSMATVSTTDSRSSLLAKYQPSLPLVESDNFNKKNHVPLRNNNDICNNFRAEENIHSVNHIDVTMGSSPVMSHKPTIHQRLNFTRRGWSSFFKQ.

One can recognise a Cyclin N-terminal domain in the interval 19–146; that stretch reads EMIQFLATST…LLEYLNWDVR (128 aa).

Belongs to the cyclin family. PCL1,2 subfamily. As to quaternary structure, forms a cyclin-CDK complex with PHO85.

In terms of biological role, m/G1-specific cyclin partner of the cyclin-dependent kinase (CDK) PHO85. May have a role in bud site selection in G1 phase. This is PHO85 cyclin-9 (PCL9) from Saccharomyces cerevisiae (strain ATCC 204508 / S288c) (Baker's yeast).